The following is a 132-amino-acid chain: Small ribosomal subunit protein uS8c (132 aa).

It belongs to the universal ribosomal protein uS8 family. Part of the 30S ribosomal subunit.

It localises to the plastid. The protein localises to the chloroplast. In terms of biological role, one of the primary rRNA binding proteins, it binds directly to 16S rRNA central domain where it helps coordinate assembly of the platform of the 30S subunit. In Thalassiosira pseudonana (Marine diatom), this protein is Small ribosomal subunit protein uS8c (rps8).